A 257-amino-acid polypeptide reads, in one-letter code: Major prion protein (257 aa).

The N-terminal stretch at 1 to 24 is a signal peptide; it reads MVKSHIGSWLLVLFVATWSDIGFC. The tract at residues 25-41 is interaction with ADGRG6; sequence KKRPKPGGGWNTGGSRY. An interaction with GRB2, ERI3 and SYN1 region spans residues 25-234; sequence KKRPKPGGGW…ESEAYYQRGA (210 aa). The segment at 27–114 is disordered; it reads RPKPGGGWNT…KPSKPKTNMK (88 aa). A run of 5 repeats spans residues 54 to 62, 63 to 70, 71 to 78, 79 to 86, and 87 to 95. The 5 X 8 AA tandem repeats of P-H-G-G-G-W-G-Q stretch occupies residues 54–95; sequence PQGGGGWGQPHGGGWGQPHGGGWGQPHGGGWGQPHGGGGWGQ. Gly residues predominate over residues 55 to 101; that stretch reads QGGGGWGQPHGGGWGQPHGGGWGQPHGGGWGQPHGGGGWGQGGGSHG. 12 residues coordinate Cu(2+): His64, Gly65, Gly66, His72, Gly73, Gly74, His80, Gly81, Gly82, His88, Gly90, and Gly91. Cysteines 183 and 218 form a disulfide. 2 N-linked (GlcNAc...) asparagine glycosylation sites follow: Asn185 and Asn201. Ala234 carries the GPI-anchor amidated alanine lipid modification. Residues 235–257 constitute a propeptide, removed in mature form; that stretch reads SAILFSPPPVILLISLLILLIVG.

It belongs to the prion family. As to quaternary structure, monomer and homodimer. Has a tendency to aggregate into amyloid fibrils containing a cross-beta spine, formed by a steric zipper of superposed beta-strands. Soluble oligomers may represent an intermediate stage on the path to fibril formation. Copper binding may promote oligomerization. Interacts with GRB2, APP, ERI3/PRNPIP and SYN1. Mislocalized cytosolically exposed PrP interacts with MGRN1; this interaction alters MGRN1 subcellular location and causes lysosomal enlargement. Interacts with APP. Interacts with KIAA1191. Interacts with ADGRG6.

It localises to the cell membrane. The protein localises to the golgi apparatus. Its function is as follows. Its primary physiological function is unclear. May play a role in neuronal development and synaptic plasticity. May be required for neuronal myelin sheath maintenance. May promote myelin homeostasis through acting as an agonist for ADGRG6 receptor. May play a role in iron uptake and iron homeostasis. Soluble oligomers are toxic to cultured neuroblastoma cells and induce apoptosis (in vitro). Association with GPC1 (via its heparan sulfate chains) targets PRNP to lipid rafts. Also provides Cu(2+) or Zn(2+) for the ascorbate-mediated GPC1 deaminase degradation of its heparan sulfate side chains. In Neovison vison (American mink), this protein is Major prion protein (PRNP).